Reading from the N-terminus, the 321-residue chain is N-acetyllactosaminide alpha-1,3-galactosyltransferase-like 1 (321 aa).

Over 1 to 6 the chain is Cytoplasmic; it reads MQYKKE. Residues 7-24 form a helical; Signal-anchor for type II membrane protein membrane-spanning segment; it reads TLLLILLAILLALTQRYS. Residues 25-321 are Lumenal-facing; it reads RTKDHLQKMY…IKVAWQPRIT (297 aa). N-linked (GlcNAc...) asparagine glycans are attached at residues N87 and N99. Substrate contacts are provided by residues 95–100, 187–189, and 209–212; these read FATGNF, TAN, and HAWW. E277 serves as the catalytic Nucleophile.

The protein belongs to the glycosyltransferase 6 family. The cofactor is Mn(2+).

It localises to the golgi apparatus. The protein localises to the golgi stack membrane. It carries out the reaction a beta-D-galactosyl-(1-&gt;4)-N-acetyl-beta-D-glucosaminyl derivative + UDP-alpha-D-galactose = an alpha-D-galactosyl-(1-&gt;3)-beta-D-galactosyl-(1-&gt;4)-N-acetyl-beta-D-glucosaminyl derivative + UDP + H(+). Its pathway is protein modification; protein glycosylation. In terms of biological role, synthesizes the galactose-alpha(1,3)-galactose group by catalyzing the transfer of a galactose residue, with an alpha-1,3 linkage, on terminal lactosaminide (Gal-beta-1,4-GlcNAc-R) disaccharide borne by a glycoprotein or a glycolipid. The chain is N-acetyllactosaminide alpha-1,3-galactosyltransferase-like 1 (Ggta1l1) from Rattus norvegicus (Rat).